The primary structure comprises 435 residues: Astacin-like metalloendopeptidase (435 aa).

Positions 1–23 are cleaved as a signal peptide; that stretch reads MGIMGSLWPWILTMLSLLGLSMG. Residues 85 to 282 enclose the Peptidase M12A domain; that stretch reads RLLSVTNNKW…TRVCRLYNCS (198 aa). 2 disulfides stabilise this stretch: C132/C281 and C153/C172. Zn(2+) is bound at residue H182. The active site involves E183. H186 and H192 together coordinate Zn(2+). Positions 318-329 are enriched in low complexity; sequence SEESGSSAPSGS. The disordered stretch occupies residues 318-356; that stretch reads SEESGSSAPSGSRTGGQSIAGLGNSQQGWEHPPQSTFSV. Positions 340-355 are enriched in polar residues; that stretch reads GNSQQGWEHPPQSTFS.

As to quaternary structure, interacts (via N-terminal domain) with SPACA3; the interaction occurs during fertilization. The cofactor is Zn(2+). Ovary-specific. Expressed in secondary, antral and Graafian follicle oocytes. Expressed in the egg cells. Not detected in two-cell embryos. Not detected in naked oocytes, oocytes in primordial or unilaminar primary follicles, or in any other ovarian cells at pre-pubertal, pubertal or adult stages (at protein level). Ovary-specific.

It is found in the cytoplasm. The protein resides in the cell membrane. It localises to the cytoplasmic vesicle. The protein localises to the secretory vesicle. Its subcellular location is the cortical granule. With respect to regulation, inhibited by wide spectrum metalloproteinase inhibitor batimastat (BB-94). Also inhibited by EDTA. In terms of biological role, oocyte-specific oolemmal receptor involved in sperm and egg adhesion and fertilization. Plays a role in the polyspermy inhibition. Probably acts as a protease for the post-fertilization cleavage of ZP2. Cleaves the sperm-binding ZP2 at the surface of the zona pellucida after fertilization and cortical granule exocytosis, rendering the zona pellucida unable to support further sperm binding. This is Astacin-like metalloendopeptidase from Mus musculus (Mouse).